A 223-amino-acid polypeptide reads, in one-letter code: Endonuclease V (223 aa).

Mg(2+) contacts are provided by Asp-35 and Asp-103.

The protein belongs to the endonuclease V family. Mg(2+) is required as a cofactor.

The protein resides in the cytoplasm. The catalysed reaction is Endonucleolytic cleavage at apurinic or apyrimidinic sites to products with a 5'-phosphate.. Functionally, DNA repair enzyme involved in the repair of deaminated bases. Selectively cleaves double-stranded DNA at the second phosphodiester bond 3' to a deoxyinosine leaving behind the intact lesion on the nicked DNA. The protein is Endonuclease V of Salmonella enteritidis PT4 (strain P125109).